Reading from the N-terminus, the 373-residue chain is Anhydro-N-acetylmuramic acid kinase (373 aa).

Gly12–Asp19 contributes to the ATP binding site.

Belongs to the anhydro-N-acetylmuramic acid kinase family.

It catalyses the reaction 1,6-anhydro-N-acetyl-beta-muramate + ATP + H2O = N-acetyl-D-muramate 6-phosphate + ADP + H(+). The protein operates within amino-sugar metabolism; 1,6-anhydro-N-acetylmuramate degradation. It functions in the pathway cell wall biogenesis; peptidoglycan recycling. Functionally, catalyzes the specific phosphorylation of 1,6-anhydro-N-acetylmuramic acid (anhMurNAc) with the simultaneous cleavage of the 1,6-anhydro ring, generating MurNAc-6-P. Is required for the utilization of anhMurNAc either imported from the medium or derived from its own cell wall murein, and thus plays a role in cell wall recycling. The protein is Anhydro-N-acetylmuramic acid kinase of Salmonella paratyphi A (strain ATCC 9150 / SARB42).